The chain runs to 728 residues: Sodium-dependent transporter snf-5 (728 aa).

Residues 1–84 (MADSGSNEEA…PEEEEEKRDG (84 aa)) are Cytoplasmic-facing. Residues 1–84 (MADSGSNEEA…PEEEEEKRDG (84 aa)) form a disordered region. Low complexity-rich tracts occupy residues 29–50 (QQVSQQSNQLSSQKSIQQSTQS) and 60–73 (KNTTVTTTRPTLDT). A helical transmembrane segment spans residues 85–105 (FGNSFEFVLTSLGLAVGLGNI). 4 residues coordinate Na(+): G97, A99, V100, and N104. The Extracellular segment spans residues 106-119 (WRFPTRAYNNGGSA). Residues 120–140 (FLIPYLTCAFLFGLPAVYFEF) form a helical membrane-spanning segment. Over 141-162 (LTGQYQGKSPPVIFRRVRPILE) the chain is Cytoplasmic. Residues 163-183 (GVGWMGVFVAALVAIYYIVIV) form a helical membrane-spanning segment. The Extracellular portion of the chain corresponds to 184 to 285 (SWISIYMINI…PSSGMLDFGG (102 aa)). A disulfide bridge links C204 with C214. 5 N-linked (GlcNAc...) asparagine glycosylation sites follow: N210, N225, N232, N237, and N257. The chain crosses the membrane as a helical span at residues 286–306 (FNWPVFAAMSVCWLLTGLGIL). The Cytoplasmic segment spans residues 307 to 314 (KGAKIMGK). The helical transmembrane segment at 315 to 335 (ISYVSVLVPYVLVVVLFINGV) threads the bilayer. At 336–364 (FQDGSGVGLEMYFGTPNYTKLYEQDTWTE) the chain is on the extracellular side. N-linked (GlcNAc...) asparagine glycosylation occurs at N352. The chain crosses the membrane as a helical span at residues 365–386 (ALKQLCFSLSVGHGGLISLSSY). S372 contacts Na(+). The Cytoplasmic segment spans residues 387–396 (SPKRNNIFRD). Residues 397–417 (ALIVIIGDTTMSLVGGGAVFA) form a helical membrane-spanning segment. Over 418-451 (TLGYLAKATGQDVKDVVKSGLSLAFVVYPEAMTR) the chain is Extracellular. A helical membrane pass occupies residues 452–472 (MPVPWLWCFIFFLMLFLLGAS). Na(+) is bound at residue L469. The Cytoplasmic portion of the chain corresponds to 473 to 495 (TEIALVDVFCSCIYDQYPRFRNR). The chain crosses the membrane as a helical span at residues 496–516 (KWIVVIAWCSVLYCIGLVFST). The Extracellular portion of the chain corresponds to 517-531 (RAGYYWFEMFDEYAA). A helical transmembrane segment spans residues 532 to 552 (GFSSVCTVVCELLVMMYIYGF). The Cytoplasmic portion of the chain corresponds to 553 to 578 (RNVRDDITEVVGHARNKFTGAIGAHS). The helical transmembrane segment at 579-599 (WYFTANWMVISPSIALILVGL) threads the bilayer. The Extracellular segment spans residues 600-616 (SFVREYPYMGRHDIYPA). The helical transmembrane segment at 617–637 (VFDIFGWFLSFLPVIIVPIFM) threads the bilayer. The Cytoplasmic portion of the chain corresponds to 638–728 (LLNFIRCRNR…DTSSTYHQVY (91 aa)). Positions 687 to 699 (PWDEENVDLTDSE) are enriched in acidic residues. The tract at residues 687–728 (PWDEENVDLTDSESESRNAASGDVPIDDVATIDTSSTYHQVY) is disordered. Over residues 718 to 728 (IDTSSTYHQVY) the composition is skewed to polar residues.

The protein belongs to the sodium:neurotransmitter symporter (SNF) (TC 2.A.22) family. Expressed in the INT-9 cells and posterior cells of the alimentary canal of the intestine, gut epithelial cells, the pharynx of some worms, two cells of the rectal gland, and in DVA, DVB and DVC neurons and amphid sensory neurons ASI, ADF and ASK neurons.

It is found in the cell membrane. In terms of biological role, sodium-dependent amino acid transporter that mediates the uptake of the L-enantiomers of various amino acids, including L-proline and L-methionine, and also of acidic amino acids such as L-glutamic acid and L-aspartic acid. May additionally have a role in potassium-dependent amino acid absorption. In response to the availability of amino acid nutrients, may play a role in dauer formation. May play a role in promoting fertility. This is Sodium-dependent transporter snf-5 from Caenorhabditis elegans.